The primary structure comprises 156 residues: Transcription inhibitor protein Gfh1 (156 aa).

A coiled-coil region spans residues 1-74 (MAREVKLTKA…LEDILSRAVI (74 aa)). E20 and E24 together coordinate Zn(2+).

This sequence belongs to the GreA/GreB family. As to quaternary structure, interacts with RNAP.

Inhibits all catalytic activities of RNA polymerase (RNAP) by partially occluding its substrate-binding site and preventing NTP binding. The protein is Transcription inhibitor protein Gfh1 (gfh1) of Thermus thermophilus (strain ATCC 27634 / DSM 579 / HB8).